We begin with the raw amino-acid sequence, 232 residues long: Ribose-5-phosphate isomerase A (232 aa).

Substrate-binding positions include threonine 28–threonine 31, aspartate 83–aspartate 86, and lysine 96–glycine 99. The active-site Proton acceptor is glutamate 105. Lysine 123 contributes to the substrate binding site.

Belongs to the ribose 5-phosphate isomerase family. In terms of assembly, homodimer.

The catalysed reaction is aldehydo-D-ribose 5-phosphate = D-ribulose 5-phosphate. The protein operates within carbohydrate degradation; pentose phosphate pathway; D-ribose 5-phosphate from D-ribulose 5-phosphate (non-oxidative stage): step 1/1. Its function is as follows. Catalyzes the reversible conversion of ribose-5-phosphate to ribulose 5-phosphate. In Rhizobium etli (strain ATCC 51251 / DSM 11541 / JCM 21823 / NBRC 15573 / CFN 42), this protein is Ribose-5-phosphate isomerase A.